The primary structure comprises 97 residues: MICOS complex subunit MIC12 (97 aa).

A helical transmembrane segment spans residues Leu-7–Tyr-24.

Belongs to the MICOS complex subunit Mic12 family. As to quaternary structure, component of the mitochondrial contact site and cristae organizing system (MICOS) complex.

Its subcellular location is the mitochondrion inner membrane. Functionally, component of the MICOS complex, a large protein complex of the mitochondrial inner membrane that plays crucial roles in the maintenance of crista junctions, inner membrane architecture, and formation of contact sites to the outer membrane. The chain is MICOS complex subunit MIC12 (AIM5) from Zygosaccharomyces rouxii (strain ATCC 2623 / CBS 732 / NBRC 1130 / NCYC 568 / NRRL Y-229).